A 325-amino-acid chain; its full sequence is tRNA uridine(34) hydroxylase (325 aa).

One can recognise a Rhodanese domain in the interval 122-218; it reads EENRCLVLDV…YGQAMGTGKW (97 aa). The active-site Cysteine persulfide intermediate is the cysteine 178.

Belongs to the TrhO family.

It catalyses the reaction uridine(34) in tRNA + AH2 + O2 = 5-hydroxyuridine(34) in tRNA + A + H2O. Its function is as follows. Catalyzes oxygen-dependent 5-hydroxyuridine (ho5U) modification at position 34 in tRNAs. This chain is tRNA uridine(34) hydroxylase, found in Chlamydia felis (strain Fe/C-56) (Chlamydophila felis).